The following is a 154-amino-acid chain: Myoglobin (154 aa).

The region spanning G2–K148 is the Globin domain. S4 carries the phosphoserine modification. H65 serves as a coordination point for nitrite. An O2-binding site is contributed by H65. At T68 the chain carries Phosphothreonine. Residue H94 participates in heme b binding.

This sequence belongs to the globin family. In terms of assembly, monomeric.

The protein resides in the cytoplasm. The protein localises to the sarcoplasm. The catalysed reaction is Fe(III)-heme b-[protein] + nitric oxide + H2O = Fe(II)-heme b-[protein] + nitrite + 2 H(+). It catalyses the reaction H2O2 + AH2 = A + 2 H2O. In terms of biological role, monomeric heme protein which primary function is to store oxygen and facilitate its diffusion within muscle tissues. Reversibly binds oxygen through a pentacoordinated heme iron and enables its timely and efficient release as needed during periods of heightened demand. Depending on the oxidative conditions of tissues and cells, and in addition to its ability to bind oxygen, it also has a nitrite reductase activity whereby it regulates the production of bioactive nitric oxide. Under stress conditions, like hypoxia and anoxia, it also protects cells against reactive oxygen species thanks to its pseudoperoxidase activity. This chain is Myoglobin (MB), found in Oryctolagus cuniculus (Rabbit).